Here is a 140-residue protein sequence, read N- to C-terminus: Nucleoside diphosphate kinase (140 aa).

The ATP site is built by Lys-11, Phe-59, Arg-87, Thr-93, Arg-104, and Asn-114. His-117 acts as the Pros-phosphohistidine intermediate in catalysis.

This sequence belongs to the NDK family. In terms of assembly, homotetramer. It depends on Mg(2+) as a cofactor.

The protein resides in the cytoplasm. The enzyme catalyses a 2'-deoxyribonucleoside 5'-diphosphate + ATP = a 2'-deoxyribonucleoside 5'-triphosphate + ADP. The catalysed reaction is a ribonucleoside 5'-diphosphate + ATP = a ribonucleoside 5'-triphosphate + ADP. Major role in the synthesis of nucleoside triphosphates other than ATP. The ATP gamma phosphate is transferred to the NDP beta phosphate via a ping-pong mechanism, using a phosphorylated active-site intermediate. This Jannaschia sp. (strain CCS1) protein is Nucleoside diphosphate kinase.